Consider the following 465-residue polypeptide: MGNLLGGVSFREPTTVEDCDSTWQTDSEPEPEQPGPAGGGEGQEQDEREQPEQPPERAGGRPRASPVPEDHAEAAGAEQGGDSTEGNAKPKRSFYAARDLYKYRHQYPNFKDIRYQNDLSNLRFYKNKIPFKPDGVYIEEVLNKWKGDYEKLEHNHTYIQWLFPLREQGLNFYAKELTTYEIEEFKKTKEAIRRFLLAYKMMLEFFGIKLIDKTGNVARAVNWQERFQHLNESQHNYLRITRILKSLGELGYESFKSPLVKFILHEALVENTIPNIKQSALEYFVYTIRDRRERRKLLRFAQKHYTPSENFIWGPPKKEQPERSKAQKTPTLPALGSNGQTSTHKKSKDSKNSSAASHLNNKTVEEKKVASREPGEETDKPSPEASSEDTKPRNSEDDNAADQSESPPKKTVNDSAGKGECPTTSSEKDGEGENQSKDSENPENTSCHAEVVSQQNVTNPQTSSG.

Disordered stretches follow at residues methionine 1–lysine 89 and glutamate 309–glycine 465. 4 stretches are compositionally biased toward basic and acidic residues: residues arginine 48 to glycine 59, proline 316 to lysine 325, threonine 363 to glutamate 396, and serine 426 to glutamate 440. Over residues proline 442–glycine 465 the composition is skewed to polar residues.

Belongs to the opioid growth factor receptor family.

This is Opioid growth factor receptor-like protein 1 (Ogfrl1) from Rattus norvegicus (Rat).